The following is an 87-amino-acid chain: Exodeoxyribonuclease 7 small subunit (87 aa).

Belongs to the XseB family. As to quaternary structure, heterooligomer composed of large and small subunits.

Its subcellular location is the cytoplasm. The enzyme catalyses Exonucleolytic cleavage in either 5'- to 3'- or 3'- to 5'-direction to yield nucleoside 5'-phosphates.. Functionally, bidirectionally degrades single-stranded DNA into large acid-insoluble oligonucleotides, which are then degraded further into small acid-soluble oligonucleotides. This chain is Exodeoxyribonuclease 7 small subunit, found in Pelotomaculum thermopropionicum (strain DSM 13744 / JCM 10971 / SI).